Here is a 320-residue protein sequence, read N- to C-terminus: Biotin synthase (320 aa).

Positions 46-275 (NMGRRVDLCS…YAHIRYAGGR (230 aa)) constitute a Radical SAM core domain. [4Fe-4S] cluster contacts are provided by Cys-64, Cys-68, and Cys-71. The [2Fe-2S] cluster site is built by Ser-108, Cys-140, Cys-200, and Arg-270.

The protein belongs to the radical SAM superfamily. Biotin synthase family. As to quaternary structure, homodimer. The cofactor is [4Fe-4S] cluster. Requires [2Fe-2S] cluster as cofactor.

The enzyme catalyses (4R,5S)-dethiobiotin + (sulfur carrier)-SH + 2 reduced [2Fe-2S]-[ferredoxin] + 2 S-adenosyl-L-methionine = (sulfur carrier)-H + biotin + 2 5'-deoxyadenosine + 2 L-methionine + 2 oxidized [2Fe-2S]-[ferredoxin]. It functions in the pathway cofactor biosynthesis; biotin biosynthesis; biotin from 7,8-diaminononanoate: step 2/2. Catalyzes the conversion of dethiobiotin (DTB) to biotin by the insertion of a sulfur atom into dethiobiotin via a radical-based mechanism. This Acetivibrio thermocellus (strain ATCC 27405 / DSM 1237 / JCM 9322 / NBRC 103400 / NCIMB 10682 / NRRL B-4536 / VPI 7372) (Clostridium thermocellum) protein is Biotin synthase.